Here is a 416-residue protein sequence, read N- to C-terminus: Serine hydroxymethyltransferase (416 aa).

(6S)-5,6,7,8-tetrahydrofolate contacts are provided by residues leucine 121 and glycine 125–leucine 127. Lysine 230 is subject to N6-(pyridoxal phosphate)lysine.

It belongs to the SHMT family. As to quaternary structure, homodimer. Requires pyridoxal 5'-phosphate as cofactor.

The protein localises to the cytoplasm. It carries out the reaction (6R)-5,10-methylene-5,6,7,8-tetrahydrofolate + glycine + H2O = (6S)-5,6,7,8-tetrahydrofolate + L-serine. It participates in one-carbon metabolism; tetrahydrofolate interconversion. It functions in the pathway amino-acid biosynthesis; glycine biosynthesis; glycine from L-serine: step 1/1. In terms of biological role, catalyzes the reversible interconversion of serine and glycine with tetrahydrofolate (THF) serving as the one-carbon carrier. This reaction serves as the major source of one-carbon groups required for the biosynthesis of purines, thymidylate, methionine, and other important biomolecules. Also exhibits THF-independent aldolase activity toward beta-hydroxyamino acids, producing glycine and aldehydes, via a retro-aldol mechanism. The chain is Serine hydroxymethyltransferase from Nitrosospira multiformis (strain ATCC 25196 / NCIMB 11849 / C 71).